The primary structure comprises 393 residues: Formate-dependent phosphoribosylglycinamide formyltransferase (393 aa).

N(1)-(5-phospho-beta-D-ribosyl)glycinamide is bound by residues 22–23 (EL) and E82. Residues R114, K155, 160–165 (SSGKGQ), 195–198 (ESFV), and E203 each bind ATP. The ATP-grasp domain occupies 119-308 (RLAAEEVGLK…EFALHVRAIL (190 aa)). Mg(2+) contacts are provided by E267 and E279. Residues D286, K356, and 363 to 364 (RR) each bind N(1)-(5-phospho-beta-D-ribosyl)glycinamide.

The protein belongs to the PurK/PurT family. As to quaternary structure, homodimer.

It catalyses the reaction N(1)-(5-phospho-beta-D-ribosyl)glycinamide + formate + ATP = N(2)-formyl-N(1)-(5-phospho-beta-D-ribosyl)glycinamide + ADP + phosphate + H(+). The protein operates within purine metabolism; IMP biosynthesis via de novo pathway; N(2)-formyl-N(1)-(5-phospho-D-ribosyl)glycinamide from N(1)-(5-phospho-D-ribosyl)glycinamide (formate route): step 1/1. Involved in the de novo purine biosynthesis. Catalyzes the transfer of formate to 5-phospho-ribosyl-glycinamide (GAR), producing 5-phospho-ribosyl-N-formylglycinamide (FGAR). Formate is provided by PurU via hydrolysis of 10-formyl-tetrahydrofolate. The chain is Formate-dependent phosphoribosylglycinamide formyltransferase from Maridesulfovibrio salexigens (strain ATCC 14822 / DSM 2638 / NCIMB 8403 / VKM B-1763) (Desulfovibrio salexigens).